A 408-amino-acid chain; its full sequence is Indian hedgehog protein (408 aa).

Positions 1–23 (MKPARLLLLLSGCALLLAPAVRC) are cleaved as a signal peptide. Cys-24 carries the N-palmitoyl cysteine lipid modification. Ca(2+) is bound by residues Glu-90, Glu-91, Asp-96, Thr-126, Glu-127, Asp-130, and Asp-132. Zn(2+) contacts are provided by His-141, Asp-148, and His-183. Gly-198 carries Cholesterol glycine ester lipidation.

The protein belongs to the hedgehog family. In terms of assembly, multimer. As to quaternary structure, interacts with BOC and CDON. Interacts with PTCH1. Interacts with glypican GPC3. Cholesterylation is required for N-product targeting to lipid rafts and multimerization. In terms of processing, the C-terminal domain displays an autoproteolysis activity and a cholesterol transferase activity. Both activities result in the cleavage of the full-length protein and covalent attachment of a cholesterol moiety to the C-terminal of the newly generated N-product. The N-product is the active species in both local and long-range signaling, whereas the C-product is degraded in the endoplasmic reticulum. Post-translationally, N-palmitoylation by HHAT of N-product is required for indian hedgehog protein N-product multimerization and full activity. As to expression, expressed in developing midgut, lung and cartilage of developing long bones in the limb.

The protein localises to the cell membrane. It is found in the endoplasmic reticulum membrane. It localises to the golgi apparatus membrane. The protein resides in the secreted. It carries out the reaction glycyl-L-cysteinyl-[protein] + cholesterol + H(+) = [protein]-C-terminal glycyl cholesterol ester + N-terminal L-cysteinyl-[protein]. Its function is as follows. Plays a role in embryonic morphogenesis; it is involved in the regulation of endochondral skeleton formation, and the development of retinal pigment epithelium (RPE), photoreceptors and periocular tissues. In terms of biological role, the C-terminal part of the indian hedgehog protein precursor displays an autoproteolysis and a cholesterol transferase activity. Both activities result in the cleavage of the full-length protein into two parts followed by the covalent attachment of a cholesterol moiety to the C-terminal of the newly generated N-product. Both activities occur in the endoplasmic reticulum. Functionally, the dually lipidated indian hedgehog protein N-product is a morphogen which is essential for a variety of patterning events during development. Binds to the patched (PTCH1) receptor, which functions in association with smoothened (SMO), to activate the transcription of target genes. Plays a role in morphogenesis of the skeleton by coordinating growth and differentiation of the endochondral skeleton. Positively regulates PTHLH expression during endochondral bone formation preventing chondrocyte hypertrophy. In contrast, participates in normal chondrocyte proliferation in a PTHLH-independent pathway. This Gallus gallus (Chicken) protein is Indian hedgehog protein.